Here is a 520-residue protein sequence, read N- to C-terminus: Probable cytochrome P450 4p2 (520 aa).

2 residues coordinate heme: glutamate 325 and cysteine 464.

The protein belongs to the cytochrome P450 family. It depends on heme as a cofactor.

It localises to the endoplasmic reticulum membrane. The protein resides in the microsome membrane. May be involved in the metabolism of insect hormones and in the breakdown of synthetic insecticides. This chain is Probable cytochrome P450 4p2 (Cyp4p2), found in Drosophila melanogaster (Fruit fly).